The primary structure comprises 720 residues: Phosphatase and actin regulator 4 (720 aa).

The tract at residues M1 to F48 is disordered. An RPEL 1 repeat occupies E74–P99. Disordered regions lie at residues S294–R417, N454–A568, and R610–R648. The segment covering T346–P368 has biased composition (pro residues). Over residues K393–A405 the composition is skewed to basic and acidic residues. Composition is skewed to acidic residues over residues D481 to Q494, E521 to S534, and D542 to E551. 2 RPEL repeats span residues T601–N626 and R639–E664. The span at N626–E636 shows a compositional bias: basic and acidic residues. The span at I637–S646 shows a compositional bias: basic residues.

The protein belongs to the phosphatase and actin regulator family. As to quaternary structure, binds PPP1CA and actin.

The protein resides in the cytoplasm. It localises to the cell projection. Its subcellular location is the lamellipodium. Functionally, regulator of protein phosphatase 1 (PP1) required for neural tube and optic fissure closure, and enteric neural crest cell (ENCCs) migration during development. Acts as an activator of PP1. During neural tube closure, localizes to the ventral neural tube and activates PP1, leading to down-regulate cell proliferation within cranial neural tissue and the neural retina. Also acts as a regulator of migration of enteric neural crest cells (ENCCs) by activating PP1, leading to repression of the integrin signaling through the RHO/ROCK pathway. The protein is Phosphatase and actin regulator 4 (PHACTR4) of Gallus gallus (Chicken).